The primary structure comprises 473 residues: Trigger factor (473 aa).

The 88-residue stretch at 174–261 (GDIAVVSFKG…LKDLKEKELP (88 aa)) folds into the PPIase FKBP-type domain. The segment at 442-473 (ATKLTTKTTTKATTKKGVKTKSKPKVNKKEKN) is disordered. The span at 444-453 (KLTTKTTTKA) shows a compositional bias: low complexity. Over residues 454-467 (TTKKGVKTKSKPKV) the composition is skewed to basic residues.

This sequence belongs to the FKBP-type PPIase family. Tig subfamily.

It localises to the cytoplasm. It catalyses the reaction [protein]-peptidylproline (omega=180) = [protein]-peptidylproline (omega=0). Involved in protein export. Acts as a chaperone by maintaining the newly synthesized protein in an open conformation. Functions as a peptidyl-prolyl cis-trans isomerase. This Prochlorococcus marinus subsp. pastoris (strain CCMP1986 / NIES-2087 / MED4) protein is Trigger factor.